The chain runs to 219 residues: Cytidylate kinase (219 aa).

15-23 is a binding site for ATP; the sequence is GPAASGKGT.

Belongs to the cytidylate kinase family. Type 1 subfamily.

The protein localises to the cytoplasm. It carries out the reaction CMP + ATP = CDP + ADP. The catalysed reaction is dCMP + ATP = dCDP + ADP. The polypeptide is Cytidylate kinase (Brucella abortus (strain S19)).